Here is a 772-residue protein sequence, read N- to C-terminus: Larval serum protein 1 gamma chain (772 aa).

A signal peptide spans 1-16 (MKLTLVILALVACVTA). Asn-242 carries an N-linked (GlcNAc...) asparagine glycan.

This sequence belongs to the hemocyanin family. Heterohexamer, composed of three subunits, alpha, beta and gamma. In terms of tissue distribution, larval hemolymph.

Its subcellular location is the secreted. The protein resides in the extracellular space. Larval storage protein (LSP) which may serve as a store of amino acids for synthesis of adult proteins. This Drosophila melanogaster (Fruit fly) protein is Larval serum protein 1 gamma chain (Lsp1gamma).